We begin with the raw amino-acid sequence, 389 residues long: Pyruvate synthase subunit PorA (389 aa).

Heterotetramer of one alpha, one beta, one delta and one gamma chain.

The enzyme catalyses 2 oxidized [2Fe-2S]-[ferredoxin] + pyruvate + CoA = 2 reduced [2Fe-2S]-[ferredoxin] + acetyl-CoA + CO2 + H(+). The sequence is that of Pyruvate synthase subunit PorA (porA) from Methanocaldococcus jannaschii (strain ATCC 43067 / DSM 2661 / JAL-1 / JCM 10045 / NBRC 100440) (Methanococcus jannaschii).